The primary structure comprises 65 residues: Large ribosomal subunit protein uL29 (65 aa).

Belongs to the universal ribosomal protein uL29 family.

The sequence is that of Large ribosomal subunit protein uL29 from Syntrophus aciditrophicus (strain SB).